Consider the following 511-residue polypeptide: Maturase K (511 aa).

This sequence belongs to the intron maturase 2 family. MatK subfamily.

It is found in the plastid. Its subcellular location is the chloroplast. Its function is as follows. Usually encoded in the trnK tRNA gene intron. Probably assists in splicing its own and other chloroplast group II introns. In Mandragora officinarum (Mandrake), this protein is Maturase K.